Reading from the N-terminus, the 314-residue chain is 4-hydroxy-3-methylbut-2-enyl diphosphate reductase (314 aa).

C12 lines the [4Fe-4S] cluster pocket. (2E)-4-hydroxy-3-methylbut-2-enyl diphosphate contacts are provided by H41 and H74. Dimethylallyl diphosphate-binding residues include H41 and H74. Positions 41 and 74 each coordinate isopentenyl diphosphate. C96 is a [4Fe-4S] cluster binding site. H124 serves as a coordination point for (2E)-4-hydroxy-3-methylbut-2-enyl diphosphate. Residue H124 coordinates dimethylallyl diphosphate. Isopentenyl diphosphate is bound at residue H124. E126 serves as the catalytic Proton donor. T167 is a binding site for (2E)-4-hydroxy-3-methylbut-2-enyl diphosphate. C197 is a binding site for [4Fe-4S] cluster. The (2E)-4-hydroxy-3-methylbut-2-enyl diphosphate site is built by S225, S226, N227, and S269. Positions 225, 226, 227, and 269 each coordinate dimethylallyl diphosphate. 4 residues coordinate isopentenyl diphosphate: S225, S226, N227, and S269.

Belongs to the IspH family. [4Fe-4S] cluster serves as cofactor.

The catalysed reaction is isopentenyl diphosphate + 2 oxidized [2Fe-2S]-[ferredoxin] + H2O = (2E)-4-hydroxy-3-methylbut-2-enyl diphosphate + 2 reduced [2Fe-2S]-[ferredoxin] + 2 H(+). It carries out the reaction dimethylallyl diphosphate + 2 oxidized [2Fe-2S]-[ferredoxin] + H2O = (2E)-4-hydroxy-3-methylbut-2-enyl diphosphate + 2 reduced [2Fe-2S]-[ferredoxin] + 2 H(+). The protein operates within isoprenoid biosynthesis; dimethylallyl diphosphate biosynthesis; dimethylallyl diphosphate from (2E)-4-hydroxy-3-methylbutenyl diphosphate: step 1/1. It participates in isoprenoid biosynthesis; isopentenyl diphosphate biosynthesis via DXP pathway; isopentenyl diphosphate from 1-deoxy-D-xylulose 5-phosphate: step 6/6. In terms of biological role, catalyzes the conversion of 1-hydroxy-2-methyl-2-(E)-butenyl 4-diphosphate (HMBPP) into a mixture of isopentenyl diphosphate (IPP) and dimethylallyl diphosphate (DMAPP). Acts in the terminal step of the DOXP/MEP pathway for isoprenoid precursor biosynthesis. This chain is 4-hydroxy-3-methylbut-2-enyl diphosphate reductase, found in Actinobacillus succinogenes (strain ATCC 55618 / DSM 22257 / CCUG 43843 / 130Z).